The following is a 382-amino-acid chain: MKKVEILKTPVIQQRPVAPSRTSSPPVTAPRIAIKPRPPPASGNSGIPENNGPISPPDSSVSKSSGMKESVRFLNDIGEITDSISDLLTNSPNFNVISAIGPQGAGKSTILSMLAGNNSRQMYREYVFRPVSREANEQSRHQTTQIDIYVTNHQIFLDCQPMHSFSIMEGLPKLRGGRLDEATAMSDTLRLTAFLLFISHTVLVISETHFDKTIIDTIRTSEQIRPWLHQFRPKLSIERMTNLVFIKTKASSIDTAPSVIRERAQLLRLAFRDSKWLKISKEPFKCLLVLEEIRVKREHLYEGEDEIDETMLNEFDEHIAQLRVMLQRNRDDFTVETAAMDEKKWLEMCQEVIRDKTFHRILKEFHRSDRDRSSIYAENGDR.

Positions 1–66 (MKKVEILKTP…PDSSVSKSSG (66 aa)) are disordered.

Belongs to the SMG9 family.

Its function is as follows. Involved in nonsense-mediated decay (NMD) of mRNAs containing premature stop codons. Probable component of kinase complex containing smg-1 and recruited to stalled ribosomes. This Caenorhabditis briggsae protein is Nonsense-mediated mRNA decay factor SMG9 (smg-9).